A 127-amino-acid polypeptide reads, in one-letter code: DNA-directed RNA polymerase subunit omega (127 aa).

Belongs to the RNA polymerase subunit omega family. In terms of assembly, the RNAP catalytic core consists of 2 alpha, 1 beta, 1 beta' and 1 omega subunit. When a sigma factor is associated with the core the holoenzyme is formed, which can initiate transcription.

It catalyses the reaction RNA(n) + a ribonucleoside 5'-triphosphate = RNA(n+1) + diphosphate. Promotes RNA polymerase assembly. Latches the N- and C-terminal regions of the beta' subunit thereby facilitating its interaction with the beta and alpha subunits. In Rickettsia africae (strain ESF-5), this protein is DNA-directed RNA polymerase subunit omega.